An 87-amino-acid polypeptide reads, in one-letter code: Toxin Cll4 (87 aa).

Residues 1 to 19 (MNSLLMITACLALIGTVWA) form the signal peptide. The LCN-type CS-alpha/beta domain maps to 20–85 (KEGYIVNYHD…VWPLPKKRCN (66 aa)). Disulfide bonds link cysteine 31-cysteine 84, cysteine 35-cysteine 60, cysteine 44-cysteine 65, and cysteine 48-cysteine 67. At asparagine 85 the chain carries Asparagine amide.

Belongs to the long (4 C-C) scorpion toxin superfamily. Sodium channel inhibitor family. Beta subfamily. As to expression, expressed by the venom gland.

It is found in the secreted. Its function is as follows. Beta toxins bind voltage-independently at site-4 of sodium channels (Nav) and shift the voltage of activation toward more negative potentials thereby affecting sodium channel activation and promoting spontaneous and repetitive firing. This is Toxin Cll4 from Centruroides limpidus (Mexican scorpion).